The primary structure comprises 171 residues: Small ribosomal subunit protein uS13 (171 aa).

Polar residues predominate over residues 1 to 11; the sequence is MAKGSANNVKV. Disordered stretches follow at residues 1-24 and 144-164; these read MAKG…EKKE and EKGK…GLSI. Residues 144 to 158 are compositionally biased toward basic residues; it reads EKGKKVRGQRTRSNG.

This sequence belongs to the universal ribosomal protein uS13 family. As to quaternary structure, part of the 30S ribosomal subunit. Forms a loose heterodimer with protein S19. Forms two bridges to the 50S subunit in the 70S ribosome.

Functionally, located at the top of the head of the 30S subunit, it contacts several helices of the 16S rRNA. In the 70S ribosome it contacts the 23S rRNA (bridge B1a) and protein L5 of the 50S subunit (bridge B1b), connecting the 2 subunits; these bridges are implicated in subunit movement. In Thermoplasma acidophilum (strain ATCC 25905 / DSM 1728 / JCM 9062 / NBRC 15155 / AMRC-C165), this protein is Small ribosomal subunit protein uS13.